We begin with the raw amino-acid sequence, 426 residues long: MQTIFAQATARGKAGVAIIRISGPDAFEVGRCLLGSLPDAGRFALRDVRTPLGELLDRGLVLVFKAPASFTGEDTVELQLHGSVAVVRAVEGAIRSTGLARLADAGEFTQRALLNDMLDLTQVEGLGRLIDSETEAQRKVAQASFEGGLSDKAERWRHLMIRAAALLEASIDFVDEDVPVDVVPEVQSILMGLDTDLAKEVTGAVVAERLHDGFEVAILGAPNAGKSTLLNVLADREIAITSDVPGTTRDVIEARLDVSGLPVTFLDTAGIRDTVDVIEKIGVQRAIDRALAADVRILLEIDDWILPDVLSDTIDFRYRAKADLSDGEGISGRTGVGIDRLLTDIEGVLSEKMSAVRSAVTDRQRGGIEAARVSLDAGVTVLSGTAELELAAEHIRHAQRSLDSVIGRVDVENLLGEIFSRFCIGK.

(6S)-5-formyl-5,6,7,8-tetrahydrofolate is bound by residues R20, E77, and M117. The 138-residue stretch at 213–350 folds into the TrmE-type G domain; sequence GFEVAILGAP…LLTDIEGVLS (138 aa). Residue N223 participates in K(+) binding. GTP contacts are provided by residues 223 to 228, 242 to 248, and 267 to 270; these read NAGKST, SDVPGTT, and DTAG. Residue S227 participates in Mg(2+) binding. The K(+) site is built by S242, V244, and T247. T248 lines the Mg(2+) pocket. (6S)-5-formyl-5,6,7,8-tetrahydrofolate is bound at residue K426.

This sequence belongs to the TRAFAC class TrmE-Era-EngA-EngB-Septin-like GTPase superfamily. TrmE GTPase family. As to quaternary structure, homodimer. Heterotetramer of two MnmE and two MnmG subunits. The cofactor is K(+).

Its subcellular location is the cytoplasm. Exhibits a very high intrinsic GTPase hydrolysis rate. Involved in the addition of a carboxymethylaminomethyl (cmnm) group at the wobble position (U34) of certain tRNAs, forming tRNA-cmnm(5)s(2)U34. This is tRNA modification GTPase MnmE from Jannaschia sp. (strain CCS1).